A 269-amino-acid chain; its full sequence is Chymotrypsin-like elastase family member 2A (269 aa).

An N-terminal signal peptide occupies residues 1-16; sequence MIRTLLLSTLVAGALS. Residues 17–28 constitute a propeptide, activation peptide; it reads CGDPTYPPYVTR. Residues 29-267 form the Peptidase S1 domain; it reads VVGGEEARPN…YIDWINSVIA (239 aa). Cysteine 58 and cysteine 74 form a disulfide bridge. Catalysis depends on charge relay system residues histidine 73 and aspartate 121. 3 cysteine pairs are disulfide-bonded: cysteine 155–cysteine 222, cysteine 186–cysteine 202, and cysteine 212–cysteine 243. Serine 216 serves as the catalytic Charge relay system.

It belongs to the peptidase S1 family. Elastase subfamily. As to quaternary structure, interacts with CPA1. Interacts with SERPINA1. Expressed in pancreas. Not detected in keratinocytes. Detected in exocrine secretions of the pancreas (at protein level). Also expressed in a small fraction of cells in pancreatic islets, adrenal cortex, intestinal glands and colonic lymphoid follicles (at protein level). Detected in plasma.

The protein localises to the secreted. The enzyme catalyses Preferential cleavage: Leu-|-Xaa, Met-|-Xaa and Phe-|-Xaa. Hydrolyzes elastin.. Functionally, elastase that enhances insulin signaling and might have a physiologic role in cellular glucose metabolism. Circulates in plasma and reduces platelet hyperactivation, triggers both insulin secretion and degradation, and increases insulin sensitivity. This is Chymotrypsin-like elastase family member 2A from Homo sapiens (Human).